Here is a 485-residue protein sequence, read N- to C-terminus: NADH-quinone oxidoreductase subunit N (485 aa).

14 helical membrane-spanning segments follow: residues L8–I28, F35–V55, L75–L95, F105–L125, S127–F147, Y159–A179, L203–F223, P235–M255, V271–Q291, L297–K317, V326–L346, A374–G394, W408–R427, and V455–I475.

It belongs to the complex I subunit 2 family. As to quaternary structure, NDH-1 is composed of 13 different subunits. Subunits NuoA, H, J, K, L, M, N constitute the membrane sector of the complex.

The protein localises to the cell inner membrane. The catalysed reaction is a quinone + NADH + 5 H(+)(in) = a quinol + NAD(+) + 4 H(+)(out). Its function is as follows. NDH-1 shuttles electrons from NADH, via FMN and iron-sulfur (Fe-S) centers, to quinones in the respiratory chain. The immediate electron acceptor for the enzyme in this species is believed to be ubiquinone. Couples the redox reaction to proton translocation (for every two electrons transferred, four hydrogen ions are translocated across the cytoplasmic membrane), and thus conserves the redox energy in a proton gradient. The protein is NADH-quinone oxidoreductase subunit N of Cronobacter sakazakii (strain ATCC BAA-894) (Enterobacter sakazakii).